The chain runs to 304 residues: D-alanine--D-alanine ligase (304 aa).

The ATP-grasp domain maps to K107–G300. Residue V134–T186 coordinates ATP. The Mg(2+) site is built by D254, E267, and N269.

Belongs to the D-alanine--D-alanine ligase family. The cofactor is Mg(2+). Requires Mn(2+) as cofactor.

It is found in the cytoplasm. It catalyses the reaction 2 D-alanine + ATP = D-alanyl-D-alanine + ADP + phosphate + H(+). It functions in the pathway cell wall biogenesis; peptidoglycan biosynthesis. In terms of biological role, cell wall formation. This chain is D-alanine--D-alanine ligase, found in Halorhodospira halophila (strain DSM 244 / SL1) (Ectothiorhodospira halophila (strain DSM 244 / SL1)).